Consider the following 207-residue polypeptide: MSETYVLKADLRTRVGKGSSRELRRNGQIPAVIYGDKQEPLAIAVSYKEIFYKIHGGGFKTTVATIEVDGKKIQVLPKDYQLDPVRDFPQHVDFLRVSAKSVVHVNVPVHFKNEEAAPGIKRGGVLNVVRHDVELIVPANAIPEALEIDLSGLEIGDSVHISAVKLPKGATPAIQDRDFTIATIAAPAGLKSEENAEGAAEEAKDGE.

This sequence belongs to the bacterial ribosomal protein bL25 family. CTC subfamily. As to quaternary structure, part of the 50S ribosomal subunit; part of the 5S rRNA/L5/L18/L25 subcomplex. Contacts the 5S rRNA. Binds to the 5S rRNA independently of L5 and L18.

In terms of biological role, this is one of the proteins that binds to the 5S RNA in the ribosome where it forms part of the central protuberance. This Brucella abortus (strain S19) protein is Large ribosomal subunit protein bL25.